Consider the following 412-residue polypeptide: MKKVSVIAAAVAATLAAGSAFAVDFNGYFRAGTGISGNGNADQAVNKAGTGRLGNENDNYYEFGFAEELKTGEQTWKVESMIAQGNSGANGWEDGDFNVAQFNVQAKGLLASDQEAVMWAGKRYYQRKDIHITDFYFLNTSGTGGGIENLSVGNQKLSVALVQDGDNTNSSGYIFDARLANIGLWENASLELAMAYNFATEKDSKNEVADDGVLVSAILHQGLSNGFNQTVFQYGTAGYGAQAANFWGAGSYYARGTEAFNDASGFRLLNWGVINLGENWEMGHQLAYLAGSDIGGQFGGDGANKNTYTGKSFDIDQYSVVVRPMYKWNDTMRTVFEAGYNAGEKISNGGLATEDFGNAKFTVAQAWAMGDSFWARPELRVYGTYLLDTENDKAFGDDDTEFVVGIQVEAWW.

Residues Met-1–Ala-22 form the signal peptide.

Belongs to the porin LamB (TC 1.B.3) family. As to quaternary structure, homotrimer formed of three 18-stranded antiparallel beta-barrels, containing three independent channels.

It localises to the cell outer membrane. The catalysed reaction is beta-maltose(in) = beta-maltose(out). Its function is as follows. Involved in the transport of maltose and maltodextrins. In Vibrio cholerae serotype O1 (strain ATCC 39315 / El Tor Inaba N16961), this protein is Maltoporin.